Here is a 306-residue protein sequence, read N- to C-terminus: Ribonuclease Z (306 aa).

Histidine 63, histidine 65, aspartate 67, histidine 68, histidine 140, aspartate 211, and histidine 269 together coordinate Zn(2+). Aspartate 67 functions as the Proton acceptor in the catalytic mechanism.

Belongs to the RNase Z family. Homodimer. It depends on Zn(2+) as a cofactor.

The catalysed reaction is Endonucleolytic cleavage of RNA, removing extra 3' nucleotides from tRNA precursor, generating 3' termini of tRNAs. A 3'-hydroxy group is left at the tRNA terminus and a 5'-phosphoryl group is left at the trailer molecule.. Its function is as follows. Zinc phosphodiesterase, which displays some tRNA 3'-processing endonuclease activity. Probably involved in tRNA maturation, by removing a 3'-trailer from precursor tRNA. This Listeria monocytogenes serotype 4b (strain CLIP80459) protein is Ribonuclease Z.